Reading from the N-terminus, the 320-residue chain is Protease HtpX homolog (320 aa).

The next 2 helical transmembrane spans lie at 6-26 (TAMLLAFMTALFMFVGFLIGG) and 28-48 (AGMMIAFVIAAGMNFFSYWNS). His-130 lines the Zn(2+) pocket. Glu-131 is a catalytic residue. A Zn(2+)-binding site is contributed by His-134. A run of 2 helical transmembrane segments spans residues 145–165 (ITATLAGAISMLGNFAFFFGG) and 173–193 (PLGFVGVIVAMIVAPLAAMLV). Position 202 (Glu-202) interacts with Zn(2+). A disordered region spans residues 283–320 (MNVSTSPARAANPSRKSRSVPDTGLGRGGSQPPKGPWS).

It belongs to the peptidase M48B family. The cofactor is Zn(2+).

It is found in the cell inner membrane. This is Protease HtpX homolog from Rhizobium johnstonii (strain DSM 114642 / LMG 32736 / 3841) (Rhizobium leguminosarum bv. viciae).